The sequence spans 113 residues: Probable 4-amino-4-deoxy-L-arabinose-phosphoundecaprenol flippase subunit ArnE (113 aa).

The next 3 membrane-spanning stretches (helical) occupy residues 37–57, 62–82, and 91–111; these read SALK…LFWL, ILPL…VTLA, and AGIK…LMSL. Positions 45–111 constitute an EamA domain; that stretch reads AVILLAVGML…IMLGILLMSL (67 aa).

The protein belongs to the ArnE family. As to quaternary structure, heterodimer of ArnE and ArnF.

It is found in the cell inner membrane. Its pathway is bacterial outer membrane biogenesis; lipopolysaccharide biosynthesis. Its function is as follows. Translocates 4-amino-4-deoxy-L-arabinose-phosphoundecaprenol (alpha-L-Ara4N-phosphoundecaprenol) from the cytoplasmic to the periplasmic side of the inner membrane. This is Probable 4-amino-4-deoxy-L-arabinose-phosphoundecaprenol flippase subunit ArnE from Photorhabdus laumondii subsp. laumondii (strain DSM 15139 / CIP 105565 / TT01) (Photorhabdus luminescens subsp. laumondii).